The following is a 250-amino-acid chain: Peptidyl-tRNA hydrolase (250 aa).

Residue Tyr-14 participates in tRNA binding. Residue His-19 is the Proton acceptor of the active site. Residues Phe-64, Asn-66, and Asn-112 each coordinate tRNA. The disordered stretch occupies residues 192–250; the sequence is MGDGNQRPGGVKTDPAQLEKAPPKAQSHIRQARQNQKKPNIPESGPMAEMLKKLLGKKD. The segment covering 219-229 has biased composition (polar residues); that stretch reads HIRQARQNQKK. Over residues 241 to 250 the composition is skewed to basic and acidic residues; that stretch reads MLKKLLGKKD.

This sequence belongs to the PTH family. In terms of assembly, monomer.

Its subcellular location is the cytoplasm. The enzyme catalyses an N-acyl-L-alpha-aminoacyl-tRNA + H2O = an N-acyl-L-amino acid + a tRNA + H(+). Functionally, hydrolyzes ribosome-free peptidyl-tRNAs (with 1 or more amino acids incorporated), which drop off the ribosome during protein synthesis, or as a result of ribosome stalling. In terms of biological role, catalyzes the release of premature peptidyl moieties from peptidyl-tRNA molecules trapped in stalled 50S ribosomal subunits, and thus maintains levels of free tRNAs and 50S ribosomes. The chain is Peptidyl-tRNA hydrolase from Brucella canis (strain ATCC 23365 / NCTC 10854 / RM-666).